The primary structure comprises 393 residues: NAD(P)H-quinone oxidoreductase subunit H, chloroplastic (393 aa).

It belongs to the complex I 49 kDa subunit family. In terms of assembly, NDH is composed of at least 16 different subunits, 5 of which are encoded in the nucleus.

It localises to the plastid. The protein localises to the chloroplast thylakoid membrane. The enzyme catalyses a plastoquinone + NADH + (n+1) H(+)(in) = a plastoquinol + NAD(+) + n H(+)(out). It carries out the reaction a plastoquinone + NADPH + (n+1) H(+)(in) = a plastoquinol + NADP(+) + n H(+)(out). Functionally, NDH shuttles electrons from NAD(P)H:plastoquinone, via FMN and iron-sulfur (Fe-S) centers, to quinones in the photosynthetic chain and possibly in a chloroplast respiratory chain. The immediate electron acceptor for the enzyme in this species is believed to be plastoquinone. Couples the redox reaction to proton translocation, and thus conserves the redox energy in a proton gradient. This chain is NAD(P)H-quinone oxidoreductase subunit H, chloroplastic, found in Piper cenocladum (Ant piper).